The primary structure comprises 375 residues: LIM domain-binding protein 1 (375 aa).

2 disordered regions span residues Pro248 to Leu294 and Asp331 to Gln375. A compositionally biased stretch (low complexity) spans Ser266–Asn282. Positions Asp300–Glu339 constitute an LIM interaction domain (LID) domain.

The protein belongs to the LDB family. Forms homodimers and heterodimers. Interacts with the LIM domain of LIM/homeobox factor lhx1/lim1, and with lhx3/lim3 and lhx5/lim5. Activates lhx1/lim1 by binding. The stoichiometry of lhx1/lim1 and ldb1 is important for their function and an excess of ldb1 can inhibit lhx1/lim1 function. When bound to lhx1/lim1, escapes degradation by rnf12. The N-terminus interacts with the N-terminal region of rnf12. Post-translationally, undergoes rnf12-mediated ubiquitin-proteasome-dependent degradation. In terms of tissue distribution, ubiquitously expressed in the early gastrula before localizing to the dorsal region of the vegetal hemisphere, which contains the Spemann organizer. Expressed in the CNS, pronephros and tail bud in neurula and tail-bud stage embryos. Expressed in multiple adult tissues including brain, heart, lung, stomach, intestine, liver, spleen, kidney, ovary, muscle and skin.

It is found in the nucleus. Binds to the LIM domain of a wide variety of LIM domain-containing transcription factors. Acts as a coactivator together with otx2 to stimulate lhx1/lim1-mediated activation of the gsc promoter in the Spemann organizer. Acts synergistically with lhx1/lim1 and ssbp in axis formation. In Xenopus laevis (African clawed frog), this protein is LIM domain-binding protein 1 (ldb1).